The following is a 320-amino-acid chain: SUMO-activating enzyme subunit 1B-1 (320 aa).

The residue at position 1 (Met-1) is an N-acetylmethionine.

The protein belongs to the ubiquitin-activating E1 family. In terms of assembly, heterodimer of SAE1A or SAE1B and SAE2. The complex binds SUMO proteins via SAE2.

The protein resides in the nucleus. It participates in protein modification; protein sumoylation. In terms of biological role, the dimeric enzyme acts as an E1 ligase for SUMO1 and SUMO2. It mediates ATP-dependent activation of SUMO proteins and formation of a thioester with a conserved cysteine residue on SAE2. Functionally redundant with its paralog SAE1A. This Arabidopsis thaliana (Mouse-ear cress) protein is SUMO-activating enzyme subunit 1B-1 (SAE1B-1).